The chain runs to 555 residues: CCR4-NOT transcription complex subunit 6-like (555 aa).

A required for interaction with CNOT1, CNOT3 and CNOT7 region spans residues 1-152 (MRLIGMPKEK…SLYQDPDGTR (152 aa)). LRR repeat units lie at residues 57-78 (HLTA…IAKL), 80-101 (NLVY…LGNM), 103-125 (SLRE…GRLF), and 126-148 (QLQT…YQDP). Positions 158–555 (MLDNLAVHPE…VNGVHLPNRR (398 aa)) are nuclease domain. Glu-240 is a Mg(2+) binding site. Residues Glu-240, Glu-276, His-360, and Pro-365 each coordinate substrate. Asp-410 lines the Mg(2+) pocket. Asp-410 serves as the catalytic Proton donor/acceptor. Substrate contacts are provided by Asn-412, Asn-479, and Phe-484.

This sequence belongs to the CCR4/nocturin family. As to quaternary structure, component of the CCR4-NOT complex; distinct complexes seem to exist that differ in the participation of probably mutually exclusive catalytic subunits; the complex contains two deadenylase subunits, CNOT6 or CNOT6L, and CNOT7 or CNOT8. Interacts with CNOT1, CNOT3, CNOT7, CNOT8 and CNOT9. Interacts with TOB1. Interacts with NANOS2. Interacts with ZFP36. Interacts with ZFP36L2. Interacts with RBM46. Mg(2+) is required as a cofactor.

The protein localises to the cytoplasm. It localises to the nucleus. It carries out the reaction Exonucleolytic cleavage of poly(A) to 5'-AMP.. Functionally, poly(A) nuclease with 3'-5' RNase activity. Catalytic component of the CCR4-NOT complex which is one of the major cellular mRNA deadenylases and is linked to various cellular processes including bulk mRNA degradation, miRNA-mediated repression, translational repression during translational initiation and general transcription regulation. Additional complex functions may be a consequence of its influence on mRNA expression. Involved in mRNA decay mediated by the major-protein-coding determinant of instability (mCRD) of the FOS gene in the cytoplasm. Involved in deadenylation-dependent degradation of CDKN1B mRNA. Its mRNA deadenylase activity can be inhibited by TOB1. Mediates cell proliferation and cell survival and prevents cellular senescence. The protein is CCR4-NOT transcription complex subunit 6-like (Cnot6l) of Mus musculus (Mouse).